Reading from the N-terminus, the 37-residue chain is Peptide encoded by miPEP164a (37 aa).

Functionally, regulatory peptide encoded by the primary transcript (pri-miR164a) of the microRNA miR164a that enhances the accumulation of its corresponding mature miRNA. Acts probably as a transcriptional activator of its corresponding pri-miRNA. In Arabidopsis thaliana (Mouse-ear cress), this protein is Peptide encoded by miPEP164a.